Reading from the N-terminus, the 805-residue chain is Zinc finger CCCH domain-containing protein 11B (805 aa).

C3H1-type zinc fingers lie at residues 2-29 and 31-57; these read PNQGEDCYFFFYSTCTKGDSCPFRHCEA and LGNETVCTLWQEGRCFRRVCRFRHMEI. 6 disordered regions span residues 140 to 194, 223 to 351, 364 to 433, 449 to 468, 481 to 506, and 715 to 805; these read KVES…GLRV, KKMK…DKVN, MLLE…TCIK, IVASKGQSEEPAGKTKSMQE, KALRVQQSSESSTSSPSQHEATPGAR, and VTVP…PLEL. Residues 160-175 show a composition bias toward acidic residues; sequence ADDDEDDDDQFSEEGD. Residues 364 to 390 are compositionally biased toward basic and acidic residues; that stretch reads MLLERASQKHGESQTKLKTEGPSKTDD. Polar residues predominate over residues 391-402; sequence STSGARSSSTIR. Residues 403 to 423 are a coiled coil; sequence IKTFSEVLAEEEHRQQEAERQ. 2 stretches are compositionally biased toward basic and acidic residues: residues 412-433 and 455-468; these read EEEHRQQEAERQKSKKDTTCIK and QSEEPAGKTKSMQE. Low complexity-rich tracts occupy residues 486–498 and 730–749; these read QQSSESSTSSPSQ and PPTQSSSDSSPPEVSGPSSS. Positions 750-763 are enriched in polar residues; it reads QMSMKTRRLSSAST. Residues 789 to 805 are compositionally biased toward acidic residues; it reads EIDLDPGKDEDDLPLEL.

In terms of biological role, may play a role in mRNA transport. This chain is Zinc finger CCCH domain-containing protein 11B, found in Homo sapiens (Human).